The following is a 416-amino-acid chain: Glutamyl-tRNA reductase (416 aa).

Substrate-binding positions include 49 to 52 (TCNR), Ser105, 110 to 112 (EPQ), and Gln116. The Nucleophile role is filled by Cys50. 185–190 (GAGETI) provides a ligand contact to NADP(+).

Belongs to the glutamyl-tRNA reductase family. Homodimer.

It catalyses the reaction (S)-4-amino-5-oxopentanoate + tRNA(Glu) + NADP(+) = L-glutamyl-tRNA(Glu) + NADPH + H(+). It functions in the pathway porphyrin-containing compound metabolism; protoporphyrin-IX biosynthesis; 5-aminolevulinate from L-glutamyl-tRNA(Glu): step 1/2. Catalyzes the NADPH-dependent reduction of glutamyl-tRNA(Glu) to glutamate 1-semialdehyde (GSA). This chain is Glutamyl-tRNA reductase, found in Shewanella putrefaciens (strain CN-32 / ATCC BAA-453).